Reading from the N-terminus, the 347-residue chain is Vitellogenin-3 (347 aa).

An N-terminal signal peptide occupies residues M1 to A15. The N-linked (GlcNAc...) asparagine glycan is linked to N80. Low complexity predominate over residues P104–S118. Disordered regions lie at residues P104–C174 and Q200–G234. The span at P124–I133 shows a compositional bias: basic and acidic residues. The span at S144 to S163 shows a compositional bias: low complexity. The span at S164 to C174 shows a compositional bias: basic and acidic residues. N208 carries N-linked (GlcNAc...) asparagine glycosylation. Positions S209 to S219 are enriched in low complexity.

Post-translationally, phosvitin, an egg yolk storage protein, is one of the most highly phosphorylated (10%) proteins in nature. In terms of processing, cathepsin D is responsible for intraoocytic processing of vitellogenin. May contain intrachain disulfide bonds. As to expression, produced by the liver, secreted into the blood and then sequestered by receptor mediated endocytosis into growing oocytes, where it is generally cleaved, giving rise to the respective yolk components.

Precursor of the egg-yolk proteins that are sources of nutrients during early development of oviparous organisms. Functionally, phosvitin is believed to be of importance in sequestering calcium, iron and other cations for the developing embryo. This is Vitellogenin-3 (VTG3) from Gallus gallus (Chicken).